We begin with the raw amino-acid sequence, 428 residues long: Serine hydroxymethyltransferase (428 aa).

(6S)-5,6,7,8-tetrahydrofolate is bound by residues Leu-117 and 121 to 123 (GHL). An N6-(pyridoxal phosphate)lysine modification is found at Lys-226.

This sequence belongs to the SHMT family. As to quaternary structure, homodimer. The cofactor is pyridoxal 5'-phosphate.

The protein resides in the cytoplasm. It carries out the reaction (6R)-5,10-methylene-5,6,7,8-tetrahydrofolate + glycine + H2O = (6S)-5,6,7,8-tetrahydrofolate + L-serine. The protein operates within one-carbon metabolism; tetrahydrofolate interconversion. It functions in the pathway amino-acid biosynthesis; glycine biosynthesis; glycine from L-serine: step 1/1. Its function is as follows. Catalyzes the reversible interconversion of serine and glycine with tetrahydrofolate (THF) serving as the one-carbon carrier. This reaction serves as the major source of one-carbon groups required for the biosynthesis of purines, thymidylate, methionine, and other important biomolecules. Also exhibits THF-independent aldolase activity toward beta-hydroxyamino acids, producing glycine and aldehydes, via a retro-aldol mechanism. The sequence is that of Serine hydroxymethyltransferase from Aquifex aeolicus (strain VF5).